The chain runs to 431 residues: Enolase (431 aa).

Position 167 (Gln-167) interacts with (2R)-2-phosphoglycerate. Glu-209 serves as the catalytic Proton donor. Residues Asp-246, Glu-290, and Asp-317 each coordinate Mg(2+). (2R)-2-phosphoglycerate is bound by residues Lys-342, Arg-371, Ser-372, and Lys-393. Lys-342 functions as the Proton acceptor in the catalytic mechanism.

It belongs to the enolase family. In terms of assembly, component of the RNA degradosome, a multiprotein complex involved in RNA processing and mRNA degradation. Requires Mg(2+) as cofactor.

The protein localises to the cytoplasm. It is found in the secreted. The protein resides in the cell surface. It catalyses the reaction (2R)-2-phosphoglycerate = phosphoenolpyruvate + H2O. The protein operates within carbohydrate degradation; glycolysis; pyruvate from D-glyceraldehyde 3-phosphate: step 4/5. Functionally, catalyzes the reversible conversion of 2-phosphoglycerate (2-PG) into phosphoenolpyruvate (PEP). It is essential for the degradation of carbohydrates via glycolysis. This Yersinia pestis bv. Antiqua (strain Antiqua) protein is Enolase.